We begin with the raw amino-acid sequence, 155 residues long: Small ribosomal subunit protein uS7 (155 aa).

Belongs to the universal ribosomal protein uS7 family. Part of the 30S ribosomal subunit. Contacts proteins S9 and S11.

In terms of biological role, one of the primary rRNA binding proteins, it binds directly to 16S rRNA where it nucleates assembly of the head domain of the 30S subunit. Is located at the subunit interface close to the decoding center, probably blocks exit of the E-site tRNA. This is Small ribosomal subunit protein uS7 from Halorhodospira halophila (strain DSM 244 / SL1) (Ectothiorhodospira halophila (strain DSM 244 / SL1)).